We begin with the raw amino-acid sequence, 219 residues long: MEAARDYAGALIRPLTFMGSQTKRVLFTPLMHPARPFRVSNHDRSSRRGVMASSLQELISKTLDALVIATGLVTLVLEEDGTVVDTEEFFQTLGDNTHFMILEKGQKWMPGSQHVPTCSPPKRSGIARVTFDLYRLNPKDFIGCLNVKATMYEMYSVSYDIRCTGLKGLLRSLLRFLSYSAQVTGQFLIYLGTYMLRVLDDKEERPSLRSQAKGRFTCG.

Positions 33-110 (PARPFRVSNH…ILEKGQKWMP (78 aa)) constitute a CIDE-N domain. Residues 163–180 (CTGLKGLLRSLLRFLSYS) are amphipathic helix.

This sequence belongs to the CIDE family. In terms of assembly, homodimer. Interacts with CIDEC. Directly interacts with CEBPB. Interacts with isoform CLSTN3beta of CLSTN3; inhibiting the lipid transferase activity of CIDEA. In terms of tissue distribution, expressed in omental and subcutaneous adipose tissue (at protein level).

It localises to the lipid droplet. It is found in the nucleus. It carries out the reaction a triacyl-sn-glycerol(in) = a triacyl-sn-glycerol(out). In terms of biological role, lipid transferase that promotes unilocular lipid droplet formation by mediating lipid droplet fusion. Lipid droplet fusion promotes their enlargement, restricting lipolysis and favoring lipid storage. Localizes on the lipid droplet surface, at focal contact sites between lipid droplets, and mediates atypical lipid droplet fusion by promoting directional net neutral lipid transfer from the smaller to larger lipid droplets. The transfer direction may be driven by the internal pressure difference between the contacting lipid droplet pair and occurs at a lower rate than that promoted by CIDEC. May also act as a CEBPB coactivator in epithelial cells to control the expression of a subset of CEBPB downstream target genes, including ID2, IGF1, PRLR, SOCS1, SOCS3, XDH, but not casein. By interacting with CEBPB, strengthens the association of CEBPB with the XDH promoter, increases histone acetylation and dissociates HDAC1 from the promoter. When overexpressed, induces apoptosis; the physiological significance of its role in apoptosis is unclear. This Homo sapiens (Human) protein is Lipid transferase CIDEA.